Here is a 245-residue protein sequence, read N- to C-terminus: Thiopurine S-methyltransferase (245 aa).

A Phosphoserine modification is found at Ser-14. 29 to 40 (WQGKWVTGKTIF) lines the S-adenosyl-L-methionine pocket. Residue Phe-40 coordinates substrate. The residue at position 58 (Lys-58) is an N6-acetyllysine. Residues Leu-69, Glu-90, and Arg-152 each coordinate S-adenosyl-L-methionine.

This sequence belongs to the class I-like SAM-binding methyltransferase superfamily. TPMT family. As to quaternary structure, monomer.

It is found in the cytoplasm. The enzyme catalyses S-adenosyl-L-methionine + a thiopurine = S-adenosyl-L-homocysteine + a thiopurine S-methylether.. The polypeptide is Thiopurine S-methyltransferase (TPMT) (Equus caballus (Horse)).